The sequence spans 336 residues: Quinolinate synthase (336 aa).

His25 and Ser42 together coordinate iminosuccinate. Cys86 is a binding site for [4Fe-4S] cluster. Residues 117-119 (YIN) and Ser138 each bind iminosuccinate. Cys198 lines the [4Fe-4S] cluster pocket. Residues 224–226 (HPE) and Thr241 contribute to the iminosuccinate site. [4Fe-4S] cluster is bound at residue Cys288.

It belongs to the quinolinate synthase family. Type 3 subfamily. Requires [4Fe-4S] cluster as cofactor.

It localises to the cytoplasm. The catalysed reaction is iminosuccinate + dihydroxyacetone phosphate = quinolinate + phosphate + 2 H2O + H(+). The protein operates within cofactor biosynthesis; NAD(+) biosynthesis; quinolinate from iminoaspartate: step 1/1. Functionally, catalyzes the condensation of iminoaspartate with dihydroxyacetone phosphate to form quinolinate. The sequence is that of Quinolinate synthase from Helicobacter pylori (strain ATCC 700392 / 26695) (Campylobacter pylori).